The following is a 192-amino-acid chain: UPF0301 protein Jann_3896 (192 aa).

It belongs to the UPF0301 (AlgH) family.

The sequence is that of UPF0301 protein Jann_3896 from Jannaschia sp. (strain CCS1).